A 127-amino-acid chain; its full sequence is Cliotide T3 (127 aa).

Positions 1–24 (MAYVRLTSLAVLFFLAASVMKTEG) are cleaved as a signal peptide. The cyclopeptide (Gly-Asn) cross-link spans 25–53 (GLPTCGETCTLGTCYVPDCSCSWPICMKN). Intrachain disulfides connect cysteine 29–cysteine 43, cysteine 33–cysteine 45, and cysteine 38–cysteine 50. Residues 54 to 127 (HIIAANAKTV…DLKMPLESTN (74 aa)) constitute a propeptide, removed in mature form.

Contains 3 disulfide bonds. Post-translationally, this is a cyclic peptide. In terms of tissue distribution, expressed in flower, stem, shoot, leaf and seed but not in root, pod and nodule (at protein level).

Its function is as follows. Probably participates in a plant defense mechanism. Not active against Gram-negative bacteria E.coli ATCC 700926, K.pneumoniae ATTC 13883 and P.aeruginosa ATCC 39018 at concentration up to 100 uM. Has cytotoxic and hemolytic activity. In Clitoria ternatea (Butterfly pea), this protein is Cliotide T3.